Consider the following 467-residue polypeptide: Cysteine--tRNA ligase (467 aa).

Cysteine 27 serves as a coordination point for Zn(2+). Residues 29 to 39 (PTVYNYIHIGN) carry the 'HIGH' region motif. Zn(2+)-binding residues include cysteine 207, histidine 232, and glutamate 236. The short motif at 264–268 (KMSKS) is the 'KMSKS' region element. ATP is bound at residue lysine 267.

It belongs to the class-I aminoacyl-tRNA synthetase family. In terms of assembly, monomer. It depends on Zn(2+) as a cofactor.

It localises to the cytoplasm. The catalysed reaction is tRNA(Cys) + L-cysteine + ATP = L-cysteinyl-tRNA(Cys) + AMP + diphosphate. This Caldanaerobacter subterraneus subsp. tengcongensis (strain DSM 15242 / JCM 11007 / NBRC 100824 / MB4) (Thermoanaerobacter tengcongensis) protein is Cysteine--tRNA ligase.